Reading from the N-terminus, the 431-residue chain is CCA tRNA nucleotidyltransferase 1, mitochondrial (431 aa).

The N-terminal 31 residues, 1–31 (MWAKLFLRPSFVNRVHLTWSCRALLTMQLKT), are a transit peptide targeting the mitochondrion. ATP-binding residues include G61 and R64. Residues G61 and R64 each coordinate CTP. 2 residues coordinate Mg(2+): D74 and D76. The ATP site is built by R148, D191, R194, R197, and R200. Residues R148, D191, R194, R197, and R200 each contribute to the CTP site.

The protein belongs to the tRNA nucleotidyltransferase/poly(A) polymerase family. As to quaternary structure, monomer, and homodimer. Requires Mg(2+) as cofactor. Expressed ubiquitously during early embryogenesis.

It is found in the mitochondrion. The protein localises to the cytoplasm. It localises to the nucleus. It carries out the reaction a tRNA precursor + 2 CTP + ATP = a tRNA with a 3' CCA end + 3 diphosphate. The enzyme catalyses a tRNA with a 3' CCA end + 2 CTP + ATP = a tRNA with a 3' CCACCA end + 3 diphosphate. Its function is as follows. Nucleotidyltransferase that catalyzes the addition and repair of the essential 3'-terminal CCA sequence in tRNAs, which is necessary for the attachment of amino acids to the 3' terminus of tRNA molecules, using CTP and ATP as substrates. tRNA 3'-terminal CCA addition is required both for tRNA processing and repair. Promotes tRNA repair and recycling downstream of the ribosome-associated quality control (RQC) pathway by mediating addition of the tRNA 3'-terminal CCA following cleavage by ankzf1 and repair by elac1. Also involved in tRNA surveillance by mediating tandem CCA addition to generate a CCACCA at the 3' terminus of unstable tRNAs and tRNA-like transcripts. While stable tRNAs receive only 3'-terminal CCA, unstable tRNAs beginning with GG are marked with CCACCA and rapidly degraded. The structural flexibility of RNA controls the choice between CCA versus CCACCA addition: following the first CCA addition cycle, nucleotide-binding to the active site triggers a clockwise screw motion, producing torque on the RNA. This ejects stable RNAs, whereas unstable RNAs are refolded while bound to the enzyme and subjected to a second CCA catalytic cycle. The sequence is that of CCA tRNA nucleotidyltransferase 1, mitochondrial from Danio rerio (Zebrafish).